The chain runs to 685 residues: DNA ligase (685 aa).

Residues 47–51, 96–97, and Glu125 contribute to the NAD(+) site; these read DSEYD and SL. Catalysis depends on Lys127, which acts as the N6-AMP-lysine intermediate. NAD(+) contacts are provided by Arg148, Glu185, Lys304, and Lys328. Cys422, Cys425, Cys440, and Cys446 together coordinate Zn(2+). In terms of domain architecture, BRCT spans 605 to 685; it reads ADAQPLKGQT…ALLALFAANR (81 aa).

This sequence belongs to the NAD-dependent DNA ligase family. LigA subfamily. The cofactor is Mg(2+). Requires Mn(2+) as cofactor.

The catalysed reaction is NAD(+) + (deoxyribonucleotide)n-3'-hydroxyl + 5'-phospho-(deoxyribonucleotide)m = (deoxyribonucleotide)n+m + AMP + beta-nicotinamide D-nucleotide.. In terms of biological role, DNA ligase that catalyzes the formation of phosphodiester linkages between 5'-phosphoryl and 3'-hydroxyl groups in double-stranded DNA using NAD as a coenzyme and as the energy source for the reaction. It is essential for DNA replication and repair of damaged DNA. This Shewanella putrefaciens (strain CN-32 / ATCC BAA-453) protein is DNA ligase.